Reading from the N-terminus, the 91-residue chain is Sec-independent protein translocase protein TatA (91 aa).

A helical transmembrane segment spans residues 1 to 21 (MGIFDWKHWIVILIVVVLVFG). Residues 42 to 91 (AMHDDDKPAEQPAPQPQQAQPAPQGSPLNQPHTIDAQAHKVDEPIRKDQV) form a disordered region. Over residues 51–64 (EQPAPQPQQAQPAP) the composition is skewed to low complexity. Residues 78–91 (QAHKVDEPIRKDQV) show a composition bias toward basic and acidic residues.

Belongs to the TatA/E family. In terms of assembly, the Tat system comprises two distinct complexes: a TatABC complex, containing multiple copies of TatA, TatB and TatC subunits, and a separate TatA complex, containing only TatA subunits. Substrates initially bind to the TatABC complex, which probably triggers association of the separate TatA complex to form the active translocon.

It is found in the cell inner membrane. Part of the twin-arginine translocation (Tat) system that transports large folded proteins containing a characteristic twin-arginine motif in their signal peptide across membranes. TatA could form the protein-conducting channel of the Tat system. The chain is Sec-independent protein translocase protein TatA from Pseudomonas syringae pv. tomato (strain ATCC BAA-871 / DC3000).